We begin with the raw amino-acid sequence, 149 residues long: Hut operon positive regulatory protein (149 aa).

It belongs to the HutP family. Homohexamer.

Antiterminator that binds to cis-acting regulatory sequences on the mRNA in the presence of histidine, thereby suppressing transcription termination and activating the hut operon for histidine utilization. The protein is Hut operon positive regulatory protein of Geobacillus sp. (strain WCH70).